The following is a 197-amino-acid chain: Auxin-responsive protein IAA31 (197 aa).

Disordered stretches follow at residues 1 to 43 and 66 to 90; these read MENL…DQAK and SCLQ…ETQQ. Residues 9 to 13 carry the EAR-like (transcriptional repression) motif; the sequence is LRLGL. In terms of domain architecture, PB1 spans 99–186; it reads GLFVKVSMDG…TCKRLRIMKG (88 aa).

It belongs to the Aux/IAA family. In terms of assembly, homodimers and heterodimers. As to expression, highly expressed in etiolated seedlings. Expressed in roots.

The protein resides in the nucleus. Functionally, aux/IAA proteins are short-lived transcriptional factors that function as repressors of early auxin response genes at low auxin concentrations. In Oryza sativa subsp. japonica (Rice), this protein is Auxin-responsive protein IAA31 (IAA31).